Here is a 478-residue protein sequence, read N- to C-terminus: MKKQWTRRSAAAIAMVTTLLLSSHSFAASENNERVDPRNEAYAKDHADQYDSWRSTSDSVQIEDALAEDPNMVILWAGYGFAKDYNKARGHFYAVDDVRQTLRTGGPTDENSGPMPMACWSCKSPDVGRVIEEQGEDGYFSGKWARLGSEIQNPIGCADCHDTRSEEFKNGGPALALTKPHVERAMDAIGKPFGDQSRLDQQAAVCGQCHVEYYFTGKTKAVKFPWDKGTTVDEMEEYYDEIGFKDWTHKVSKAPMLKAQHPGYETWRDGIHGKNKVTCVDCHMPKVTKEDGTVYTDHKVGNPFDRFEDTCANCHTQSKEMLQSVVATRKAQVLKMKLTAERQIVAAHFEAGAAWDAGATEKEMAPILQDIRHAQWRWDYAIASHGVHMHAPEVALEVLGTAVDKAADARTKLVRLLAKKGITEPVAIPDISTKAAAQKALGMDMEAMKAEKKHFLETVVPEWEEQAKEREARDYEPM.

Positions 1–27 (MKKQWTRRSAAAIAMVTTLLLSSHSFA) are cleaved as a signal peptide. His91 is a binding site for heme c. Heme contacts are provided by Cys119, Cys122, and Lys123. 6 residues coordinate heme c: Cys157, Cys160, His161, Cys206, Cys209, and His210. Residues Glu212, Tyr213, Lys258, and Gln260 each contribute to the Ca(2+) site. Tyr213 contributes to the substrate binding site. Substrate is bound at residue His261. Heme c contacts are provided by His272, Cys279, Cys282, His283, His298, Cys311, Cys314, His315, and His390.

Belongs to the cytochrome c-552 family. Requires Ca(2+) as cofactor. Heme c is required as a cofactor.

The protein localises to the periplasm. It carries out the reaction 6 Fe(III)-[cytochrome c] + NH4(+) + 2 H2O = 6 Fe(II)-[cytochrome c] + nitrite + 8 H(+). The protein operates within nitrogen metabolism; nitrate reduction (assimilation). In terms of biological role, catalyzes the reduction of nitrite to ammonia, consuming six electrons in the process. The polypeptide is Cytochrome c-552 (Aliivibrio fischeri (strain ATCC 700601 / ES114) (Vibrio fischeri)).